Consider the following 341-residue polypeptide: Ribosomal RNA small subunit methyltransferase C (341 aa).

The protein belongs to the methyltransferase superfamily. RsmC family. As to quaternary structure, monomer.

It localises to the cytoplasm. It carries out the reaction guanosine(1207) in 16S rRNA + S-adenosyl-L-methionine = N(2)-methylguanosine(1207) in 16S rRNA + S-adenosyl-L-homocysteine + H(+). Functionally, specifically methylates the guanine in position 1207 of 16S rRNA in the 30S particle. This Shewanella pealeana (strain ATCC 700345 / ANG-SQ1) protein is Ribosomal RNA small subunit methyltransferase C.